The primary structure comprises 218 residues: uncharacterized protein (218 aa).

Residues 154–199 form an RING-type zinc finger; that stretch reads CFICTMEYSRTDKNLHPIILNCGHNLCRSCINKLTGNGIVKCPFDR.

This is an uncharacterized protein from Caenorhabditis elegans.